The chain runs to 232 residues: Large ribosomal subunit protein uL1 (232 aa).

This sequence belongs to the universal ribosomal protein uL1 family. Part of the 50S ribosomal subunit.

Functionally, binds directly to 23S rRNA. The L1 stalk is quite mobile in the ribosome, and is involved in E site tRNA release. In terms of biological role, protein L1 is also a translational repressor protein, it controls the translation of the L11 operon by binding to its mRNA. The chain is Large ribosomal subunit protein uL1 from Cereibacter sphaeroides (strain ATCC 17029 / ATH 2.4.9) (Rhodobacter sphaeroides).